The chain runs to 154 residues: Ribosome maturation factor RimP (154 aa).

The protein belongs to the RimP family.

Its subcellular location is the cytoplasm. Its function is as follows. Required for maturation of 30S ribosomal subunits. The sequence is that of Ribosome maturation factor RimP from Alkaliphilus oremlandii (strain OhILAs) (Clostridium oremlandii (strain OhILAs)).